Here is a 149-residue protein sequence, read N- to C-terminus: Transcriptional repressor NrdR (149 aa).

A zinc finger lies at 3 to 34; sequence CPFCGNLETQVVETRVSEDADFIRRRRQCGAC. The 91-residue stretch at 49–139 folds into the ATP-cone domain; it reads PAIVKKDGRR…VYRSFEDIDE (91 aa).

The protein belongs to the NrdR family. It depends on Zn(2+) as a cofactor.

In terms of biological role, negatively regulates transcription of bacterial ribonucleotide reductase nrd genes and operons by binding to NrdR-boxes. The chain is Transcriptional repressor NrdR from Polaromonas sp. (strain JS666 / ATCC BAA-500).